Reading from the N-terminus, the 147-residue chain is Transcriptional repressor NrdR (147 aa).

Residues 3 to 34 fold into a zinc finger; sequence CPFCGHEDTQVAETRESDEGDVIRRRRRCPSC. The 91-residue stretch at 49 to 139 folds into the ATP-cone domain; the sequence is PAIVKKDGSR…VYRSFEGVDE (91 aa).

This sequence belongs to the NrdR family. Requires Zn(2+) as cofactor.

Negatively regulates transcription of bacterial ribonucleotide reductase nrd genes and operons by binding to NrdR-boxes. This chain is Transcriptional repressor NrdR, found in Methylibium petroleiphilum (strain ATCC BAA-1232 / LMG 22953 / PM1).